The chain runs to 169 residues: Translationally-controlled tumor protein homolog (169 aa).

The region spanning 1 to 169 is the TCTP domain; that stretch reads MLIYKDILTG…WKHGLEEMKV (169 aa).

Belongs to the TCTP family.

The protein resides in the cytoplasm. The protein localises to the cytoskeleton. Functionally, involved in protein synthesis. Involved in microtubule stabilization. The protein is Translationally-controlled tumor protein homolog of Alternaria alternata (Alternaria rot fungus).